The following is a 217-amino-acid chain: tRNA (guanine-N(7)-)-methyltransferase (217 aa).

The S-adenosyl-L-methionine site is built by Glu44, Glu69, Asp96, and Asp118. Residue Asp118 is part of the active site. Residues Lys122, Asp154, and 191–194 contribute to the substrate site; that span reads TEYE.

It belongs to the class I-like SAM-binding methyltransferase superfamily. TrmB family.

The catalysed reaction is guanosine(46) in tRNA + S-adenosyl-L-methionine = N(7)-methylguanosine(46) in tRNA + S-adenosyl-L-homocysteine. It functions in the pathway tRNA modification; N(7)-methylguanine-tRNA biosynthesis. In terms of biological role, catalyzes the formation of N(7)-methylguanine at position 46 (m7G46) in tRNA. The chain is tRNA (guanine-N(7)-)-methyltransferase from Bacillus cereus (strain B4264).